The primary structure comprises 232 residues: UPF0758 protein Amet_2289 (232 aa).

The MPN domain maps to 110–232 (RIKSPDDVSN…YYSLKEKSMM (123 aa)). Residues His-181, His-183, and Asp-194 each contribute to the Zn(2+) site. The JAMM motif motif lies at 181 to 194 (HNHPSGDPSPSGED).

The protein belongs to the UPF0758 family.

This chain is UPF0758 protein Amet_2289, found in Alkaliphilus metalliredigens (strain QYMF).